The chain runs to 101 residues: RNA-binding protein Hfq (101 aa).

A Sm domain is found at 9–68 (DPFLNALRRERVPVSIYLVNGIKLQGQVESFDQFVILLKNTVSQMVYKHAISTVVPSPPV). Residues 62–101 (VVPSPPVSHHSNTPSGSTNNYHGSNPSAPQQPQQDSDDAE) form a disordered region. Residues 70–86 (HHSNTPSGSTNNYHGSN) are compositionally biased toward polar residues.

The protein belongs to the Hfq family. In terms of assembly, homohexamer.

RNA chaperone that binds small regulatory RNA (sRNAs) and mRNAs to facilitate mRNA translational regulation in response to envelope stress, environmental stress and changes in metabolite concentrations. Also binds with high specificity to tRNAs. In Yersinia pestis (strain Pestoides F), this protein is RNA-binding protein Hfq.